The chain runs to 736 residues: DNA ligase (736 aa).

NAD(+) contacts are provided by residues 41-45, 91-92, and Glu-125; these read DQEYD and SL. Lys-127 functions as the N6-AMP-lysine intermediate in the catalytic mechanism. Position 148 (Arg-148) interacts with NAD(+). Residues 170-205 are disordered; it reads ELTPLPLAGGAGGGPLDDSGSAPTPDPSRRREGKWN. NAD(+)-binding residues include Glu-215, Lys-347, and Lys-371. Residues Cys-463, Cys-466, Cys-481, and Cys-487 each coordinate Zn(2+). One can recognise a BRCT domain in the interval 656-736; that stretch reads TLDSPVAGKT…GWAEIVAAAG (81 aa).

This sequence belongs to the NAD-dependent DNA ligase family. LigA subfamily. Mg(2+) serves as cofactor. It depends on Mn(2+) as a cofactor.

The enzyme catalyses NAD(+) + (deoxyribonucleotide)n-3'-hydroxyl + 5'-phospho-(deoxyribonucleotide)m = (deoxyribonucleotide)n+m + AMP + beta-nicotinamide D-nucleotide.. Functionally, DNA ligase that catalyzes the formation of phosphodiester linkages between 5'-phosphoryl and 3'-hydroxyl groups in double-stranded DNA using NAD as a coenzyme and as the energy source for the reaction. It is essential for DNA replication and repair of damaged DNA. The sequence is that of DNA ligase from Erythrobacter litoralis (strain HTCC2594).